The chain runs to 92 residues: RNA-binding protein Hfq (92 aa).

The Sm domain occupies 9 to 68 (DPFLNALRRERVPVSVYLVNGIKLQGTIESFDQFVVLLRNTVSQMVYKHAISTVVPARNV). Positions 72-92 (PGGGYVQSNENNQAEDDDVEQ) are disordered.

It belongs to the Hfq family. In terms of assembly, homohexamer.

Functionally, RNA chaperone that binds small regulatory RNA (sRNAs) and mRNAs to facilitate mRNA translational regulation in response to envelope stress, environmental stress and changes in metabolite concentrations. Also binds with high specificity to tRNAs. The polypeptide is RNA-binding protein Hfq (Xanthomonas campestris pv. campestris (strain 8004)).